A 532-amino-acid polypeptide reads, in one-letter code: MGAGERAAGGGGAQDPGAGCGSRALSALCLLLSVGSAAACLLLGAQAAALHGRVAALEQERELLRHAGPSGALAAWAETHLERLLREKLDGVAKLRTVREAPSECICPPGPPGRRGKPGRRGDPGPPGQSGRDGYPGPLGLDGKPGLPGPKGEKGTPGDFGPRGAQGQDGVAGPPGPPGPPGARGPPGDTGKDGPRGAQGPAGPRGEPGQDGEMGPKGPPGPKGEPGIPGKKGDDGMANQPGLPGPPGPKGEPGDVGPRGENGVDGIPGLKGEPGHPGVDGATGPRGAPGLKGEQGDTVVIDYDGRILDALKGPPGPQGAPGPPGIPGAKGELGLPGAPGIDGEKGPKGPKGDPGEPGPAGPKGETGEMGLSGLPGADGPKGEKGESASDHLQESLAQIIVEPGPPGPPGPPGPMGLQGIQGPKGLDGAKGEKGTSGERGPHGLPGPVGPPGLIGLPGTKGEKGRPGEPGLDGFPGPRGEKGDRSERGEKGERGVPGRKGVKGQKGEPGPPGLDQPCPVGPDGLPVPGCWHK.

Residues 1–23 (MGAGERAAGGGGAQDPGAGCGSR) are Cytoplasmic-facing. The chain crosses the membrane as a helical; Signal-anchor for type II membrane protein span at residues 24–45 (ALSALCLLLSVGSAAACLLLGA). The Extracellular segment spans residues 46–532 (QAAALHGRVA…GLPVPGCWHK (487 aa)). Disordered stretches follow at residues 102 to 296 (PSEC…GEQG) and 308 to 532 (LDAL…CWHK). 4 Collagen-like domains span residues 108-166 (PPGP…RGAQ), 173-232 (GPPG…PGKK), 240-298 (QPGL…QGDT), and 313-372 (GPPG…MGLS). The span at 129–145 (QSGRDGYPGPLGLDGKP) shows a compositional bias: low complexity. The segment covering 174-184 (PPGPPGPPGAR) has biased composition (pro residues). The span at 196-207 (RGAQGPAGPRGE) shows a compositional bias: low complexity. Over residues 314 to 326 (PPGPQGAPGPPGI) the composition is skewed to pro residues. 2 stretches are compositionally biased toward basic and acidic residues: residues 342–354 (DGEK…KGDP) and 380–393 (PKGE…DHLQ). Pro residues predominate over residues 403-414 (PGPPGPPGPPGP). 2 Collagen-like domains span residues 404–452 (GPPG…GPPG) and 455–514 (GLPG…PGLD). Composition is skewed to basic and acidic residues over residues 427-441 (DGAK…ERGP) and 478-495 (RGEK…ERGV).

Homotrimer. Undergoes proteolytic cleavage by furin protease to yield a 60 kDa soluble form that forms a homotrimer and exhibits a low affinity interaction with heparin.

The protein localises to the cell membrane. The polypeptide is Collagen alpha-1(XXIII) chain (Col23a1) (Mus musculus (Mouse)).